Here is a 52-residue protein sequence, read N- to C-terminus: Proteinase inhibitor PSI-1.2 (52 aa).

Intrachain disulfides connect cysteine 3–cysteine 32, cysteine 7–cysteine 28, cysteine 16–cysteine 38, and cysteine 31–cysteine 49.

Its function is as follows. Potent inhibitor of trypsin and a weaker inhibitor of chymotrypsin. It does not inhibit elastase and subtilisin DY. The polypeptide is Proteinase inhibitor PSI-1.2 (Capsicum annuum (Capsicum pepper)).